The sequence spans 452 residues: tRNA modification GTPase MnmE (452 aa).

(6S)-5-formyl-5,6,7,8-tetrahydrofolate-binding residues include R25, E81, and K120. The TrmE-type G domain occupies 216–375 (GITVVIAGEP…LKNHLKNTAG (160 aa)). N226 is a K(+) binding site. GTP contacts are provided by residues 226–231 (NVGKSS), 245–251 (TDIAGTT), and 270–273 (DTAG). A Mg(2+)-binding site is contributed by S230. Residues T245, I247, and T250 each coordinate K(+). T251 lines the Mg(2+) pocket. Position 452 (K452) interacts with (6S)-5-formyl-5,6,7,8-tetrahydrofolate.

This sequence belongs to the TRAFAC class TrmE-Era-EngA-EngB-Septin-like GTPase superfamily. TrmE GTPase family. In terms of assembly, homodimer. Heterotetramer of two MnmE and two MnmG subunits. The cofactor is K(+).

It localises to the cytoplasm. In terms of biological role, exhibits a very high intrinsic GTPase hydrolysis rate. Involved in the addition of a carboxymethylaminomethyl (cmnm) group at the wobble position (U34) of certain tRNAs, forming tRNA-cmnm(5)s(2)U34. The protein is tRNA modification GTPase MnmE of Coxiella burnetii (strain Dugway 5J108-111).